The sequence spans 109 residues: uncharacterized protein (109 aa).

2 helical membrane-spanning segments follow: residues 24-44 and 68-88; these read SLGI…SAFV and VIVL…SIFI.

The protein localises to the membrane. This is an uncharacterized protein from Saccharomyces cerevisiae (strain ATCC 204508 / S288c) (Baker's yeast).